Reading from the N-terminus, the 130-residue chain is Protein ApaG (130 aa).

Residues 3-127 (RAVTRRIEVT…FSLDSPEGKR (125 aa)) form the ApaG domain.

The protein is Protein ApaG of Rhodopseudomonas palustris (strain ATCC BAA-98 / CGA009).